The following is a 215-amino-acid chain: Ras-related protein Rab-5B (215 aa).

Residues Ser29, Ala30, Gly32, Lys33, Ser34, Ser35, His46, Glu47, Thr52, Gly78, Asn133, Lys134, Asp136, Ala164, and Lys165 each coordinate GTP. Mg(2+) is bound at residue Ser34. 2 consecutive short sequence motifs (switch) follow at residues 44 to 56 (QFHE…IGAA) and 77 to 93 (AGQE…YRGA). A Mg(2+)-binding site is contributed by Thr52. A disordered region spans residues 184 to 215 (SEPQSTSGAAGRSRGVDLHEQTQQNKSQCCSN). Polar residues predominate over residues 204 to 215 (QTQQNKSQCCSN). Residues Cys212 and Cys213 are each lipidated (S-geranylgeranyl cysteine).

The protein belongs to the small GTPase superfamily. Rab family. It depends on Mg(2+) as a cofactor.

The protein localises to the cell membrane. It is found in the early endosome membrane. It carries out the reaction GTP + H2O = GDP + phosphate + H(+). Its activity is regulated as follows. Regulated by guanine nucleotide exchange factors (GEFs) which promote the exchange of bound GDP for free GTP. Regulated by GTPase activating proteins (GAPs) which increase the GTP hydrolysis activity. Inhibited by GDP dissociation inhibitors (GDIs). The small GTPases Rab are key regulators of intracellular membrane trafficking, from the formation of transport vesicles to their fusion with membranes. Rabs cycle between an inactive GDP-bound form and an active GTP-bound form that is able to recruit to membranes different sets of downstream effectors directly responsible for vesicle formation, movement, tethering and fusion. The polypeptide is Ras-related protein Rab-5B (RAB5B) (Gallus gallus (Chicken)).